A 91-amino-acid chain; its full sequence is Sec-independent protein translocase protein TatA (91 aa).

A helical membrane pass occupies residues M1–G21. The tract at residues G42 to V91 is disordered.

The protein belongs to the TatA/E family. The Tat system comprises two distinct complexes: a TatABC complex, containing multiple copies of TatA, TatB and TatC subunits, and a separate TatA complex, containing only TatA subunits. Substrates initially bind to the TatABC complex, which probably triggers association of the separate TatA complex to form the active translocon.

The protein localises to the cell inner membrane. Functionally, part of the twin-arginine translocation (Tat) system that transports large folded proteins containing a characteristic twin-arginine motif in their signal peptide across membranes. TatA could form the protein-conducting channel of the Tat system. The chain is Sec-independent protein translocase protein TatA from Methylorubrum populi (strain ATCC BAA-705 / NCIMB 13946 / BJ001) (Methylobacterium populi).